Consider the following 2376-residue polypeptide: Cell morphogenesis protein PAG1 (2376 aa).

The disordered stretch occupies residues 1 to 30 (MASRFTFPPQRDQGIGFTFPPTNKAEGSSN). The residue at position 141 (Ser-141) is a Phosphoserine. Residues 275-294 (SSSNTTSKYKHNNNTNNLPG) form a disordered region. Position 1144 is a phosphoserine (Ser-1144). Thr-2264 is subject to Phosphothreonine. Phosphoserine is present on residues Ser-2267 and Ser-2355.

This sequence to S.pombe mor2. As to quaternary structure, associates with CBK1.

Functionally, seems to play a role in cell morphogenesis. The chain is Cell morphogenesis protein PAG1 (TAO3) from Saccharomyces cerevisiae (strain ATCC 204508 / S288c) (Baker's yeast).